The following is a 288-amino-acid chain: Light-independent protochlorophyllide reductase iron-sulfur ATP-binding protein (288 aa).

ATP contacts are provided by residues Gly10–Thr15 and Lys39. Ser14 serves as a coordination point for Mg(2+). [4Fe-4S] cluster is bound by residues Cys95 and Cys129. Asn180–Arg181 is an ATP binding site.

The protein belongs to the NifH/BchL/ChlL family. In terms of assembly, homodimer. Protochlorophyllide reductase is composed of three subunits; ChlL, ChlN and ChlB. The cofactor is [4Fe-4S] cluster.

The enzyme catalyses chlorophyllide a + oxidized 2[4Fe-4S]-[ferredoxin] + 2 ADP + 2 phosphate = protochlorophyllide a + reduced 2[4Fe-4S]-[ferredoxin] + 2 ATP + 2 H2O. Its pathway is porphyrin-containing compound metabolism; chlorophyll biosynthesis (light-independent). In terms of biological role, component of the dark-operative protochlorophyllide reductase (DPOR) that uses Mg-ATP and reduced ferredoxin to reduce ring D of protochlorophyllide (Pchlide) to form chlorophyllide a (Chlide). This reaction is light-independent. The L component serves as a unique electron donor to the NB-component of the complex, and binds Mg-ATP. The sequence is that of Light-independent protochlorophyllide reductase iron-sulfur ATP-binding protein from Nostoc punctiforme (strain ATCC 29133 / PCC 73102).